A 282-amino-acid chain; its full sequence is Ammonia transport outward protein 2 (282 aa).

Positions 1–34 (MSDREQSSGNTAFENPKALDSSEGEFISENNDQS) are disordered. S2 is subject to N-acetylserine. Phosphoserine occurs at positions 2, 7, 21, 22, 28, and 40. Residues 2–86 (SDREQSSGNT…GLAPAPVHKF (85 aa)) lie on the Extracellular side of the membrane. Residues 87-107 (ANPAPLGLSGFALTTFVLSMF) form a helical membrane-spanning segment. Topologically, residues 108 to 119 (NARAQGITIPNV) are cytoplasmic. The chain crosses the membrane as a helical span at residues 120-140 (VVGCAMFYGGLVQLIAGIWEI). At 141–150 (ALENTFGGTA) the chain is on the extracellular side. A helical transmembrane segment spans residues 151-171 (LCSFGGFWLSFGAIYIPWFGI). Over 172–184 (LDAYKDKESDLGN) the chain is Cytoplasmic. Residues 185-205 (ALGFYLLGWALFTFGLSVCTM) traverse the membrane as a helical segment. The Extracellular portion of the chain corresponds to 206 to 207 (KS). Residues 208–228 (TIMFFALFFLLAVTFLLLSIA) form a helical membrane-spanning segment. Topologically, residues 229–238 (NFTGEVGVTR) are cytoplasmic. The chain crosses the membrane as a helical span at residues 239–259 (AGGVLGVIVAFIAWYNAYAGI). Over 260 to 282 (ATRQNSYIMVHPFALPSNDKVFF) the chain is Extracellular.

It belongs to the acetate uptake transporter (AceTr) (TC 2.A.96) family.

The protein localises to the cell membrane. Its function is as follows. Transporter protein required for ammonia export. Involved in acetate resistance. This Saccharomyces cerevisiae (strain ATCC 204508 / S288c) (Baker's yeast) protein is Ammonia transport outward protein 2 (ATO2).